The chain runs to 228 residues: Flavin-dependent thymidylate synthase (228 aa).

The ThyX domain maps to 1–217; that stretch reads MEYKILDKGF…PWTFEAFLKF (217 aa). FAD contacts are provided by residues T55, 78 to 80, and E86; that span reads RHR. DUMP contacts are provided by residues 75–78, 86–90, and R156; these read QWFR and EASLR. Positions 78–88 match the ThyX motif motif; it reads RHRIGSFNEAS. Residues 172-174 and N178 each bind FAD; that span reads NAR. R183 is a dUMP binding site. R183 acts as the Involved in ionization of N3 of dUMP, leading to its activation in catalysis.

It belongs to the thymidylate synthase ThyX family. In terms of assembly, homotetramer. The cofactor is FAD.

It carries out the reaction dUMP + (6R)-5,10-methylene-5,6,7,8-tetrahydrofolate + NADPH + H(+) = dTMP + (6S)-5,6,7,8-tetrahydrofolate + NADP(+). Its pathway is pyrimidine metabolism; dTTP biosynthesis. Functionally, catalyzes the reductive methylation of 2'-deoxyuridine-5'-monophosphate (dUMP) to 2'-deoxythymidine-5'-monophosphate (dTMP) while utilizing 5,10-methylenetetrahydrofolate (mTHF) as the methyl donor, and NADPH and FADH(2) as the reductant. This chain is Flavin-dependent thymidylate synthase, found in Thermosipho africanus (strain TCF52B).